A 348-amino-acid chain; its full sequence is Phenylalanine--tRNA ligase alpha subunit (348 aa).

Glutamate 259 lines the Mg(2+) pocket.

It belongs to the class-II aminoacyl-tRNA synthetase family. Phe-tRNA synthetase alpha subunit type 1 subfamily. In terms of assembly, tetramer of two alpha and two beta subunits. The cofactor is Mg(2+).

The protein resides in the cytoplasm. The catalysed reaction is tRNA(Phe) + L-phenylalanine + ATP = L-phenylalanyl-tRNA(Phe) + AMP + diphosphate + H(+). The sequence is that of Phenylalanine--tRNA ligase alpha subunit from Enterococcus faecalis (strain ATCC 700802 / V583).